We begin with the raw amino-acid sequence, 147 residues long: uncharacterized protein (147 aa).

Positions 110 to 133 are disordered; that stretch reads VLEPPTPSQPAPTPEPAVKPQPIA. Residues 113–128 are compositionally biased toward pro residues; the sequence is PPTPSQPAPTPEPAVK.

This is an uncharacterized protein from Ictalurid herpesvirus 1 (strain Auburn) (IcHV-1).